Reading from the N-terminus, the 179-residue chain is Large ribosomal subunit protein uL5 (179 aa).

The protein belongs to the universal ribosomal protein uL5 family. As to quaternary structure, part of the 50S ribosomal subunit; part of the 5S rRNA/L5/L18/L25 subcomplex. Contacts the 5S rRNA and the P site tRNA. Forms a bridge to the 30S subunit in the 70S ribosome.

In terms of biological role, this is one of the proteins that bind and probably mediate the attachment of the 5S RNA into the large ribosomal subunit, where it forms part of the central protuberance. In the 70S ribosome it contacts protein S13 of the 30S subunit (bridge B1b), connecting the 2 subunits; this bridge is implicated in subunit movement. Contacts the P site tRNA; the 5S rRNA and some of its associated proteins might help stabilize positioning of ribosome-bound tRNAs. The protein is Large ribosomal subunit protein uL5 of Glaesserella parasuis serovar 5 (strain SH0165) (Haemophilus parasuis).